The sequence spans 491 residues: Proline--tRNA ligase (491 aa).

The protein belongs to the class-II aminoacyl-tRNA synthetase family. ProS type 3 subfamily. In terms of assembly, homodimer.

Its subcellular location is the cytoplasm. It carries out the reaction tRNA(Pro) + L-proline + ATP = L-prolyl-tRNA(Pro) + AMP + diphosphate. In terms of biological role, catalyzes the attachment of proline to tRNA(Pro) in a two-step reaction: proline is first activated by ATP to form Pro-AMP and then transferred to the acceptor end of tRNA(Pro). This Amoebophilus asiaticus (strain 5a2) protein is Proline--tRNA ligase.